The sequence spans 577 residues: Arginine--tRNA ligase (577 aa).

A 'HIGH' region motif is present at residues 122-132 (PNVAKEMHVGH).

The protein belongs to the class-I aminoacyl-tRNA synthetase family. Monomer.

It localises to the cytoplasm. The catalysed reaction is tRNA(Arg) + L-arginine + ATP = L-arginyl-tRNA(Arg) + AMP + diphosphate. This Escherichia coli O139:H28 (strain E24377A / ETEC) protein is Arginine--tRNA ligase.